A 136-amino-acid polypeptide reads, in one-letter code: Large ribosomal subunit protein uL16c (136 aa).

It belongs to the universal ribosomal protein uL16 family. In terms of assembly, part of the 50S ribosomal subunit.

It localises to the plastid. The protein localises to the chloroplast. This Oryza sativa (Rice) protein is Large ribosomal subunit protein uL16c.